Here is a 319-residue protein sequence, read N- to C-terminus: Aspartate carbamoyltransferase catalytic subunit (319 aa).

Carbamoyl phosphate is bound by residues R57 and T58. Position 85 (K85) interacts with L-aspartate. Carbamoyl phosphate contacts are provided by R107, H135, and Q138. Residues R168 and R222 each coordinate L-aspartate. The carbamoyl phosphate site is built by G263 and P264.

It belongs to the aspartate/ornithine carbamoyltransferase superfamily. ATCase family. Heterododecamer (2C3:3R2) of six catalytic PyrB chains organized as two trimers (C3), and six regulatory PyrI chains organized as three dimers (R2).

The catalysed reaction is carbamoyl phosphate + L-aspartate = N-carbamoyl-L-aspartate + phosphate + H(+). It functions in the pathway pyrimidine metabolism; UMP biosynthesis via de novo pathway; (S)-dihydroorotate from bicarbonate: step 2/3. Its function is as follows. Catalyzes the condensation of carbamoyl phosphate and aspartate to form carbamoyl aspartate and inorganic phosphate, the committed step in the de novo pyrimidine nucleotide biosynthesis pathway. This chain is Aspartate carbamoyltransferase catalytic subunit, found in Paracoccus denitrificans (strain Pd 1222).